The chain runs to 433 residues: Protein translocase subunit SecY (433 aa).

10 helical membrane passes run 17 to 37 (IVFT…PIPG), 71 to 91 (IFAL…LMSV), 117 to 137 (LTVL…ESIV), 141 to 161 (GPVV…TLVV), 184 to 204 (LIIF…MFEL), 212 to 232 (PLIA…IIFF), 268 to 288 (GVIP…LANF), 310 to 330 (YILL…AIVF), 366 to 386 (LTVI…LLMN), and 388 to 408 (YVIS…VVLD).

The protein belongs to the SecY/SEC61-alpha family. As to quaternary structure, component of the Sec protein translocase complex. Heterotrimer consisting of SecY, SecE and SecG subunits. The heterotrimers can form oligomers, although 1 heterotrimer is thought to be able to translocate proteins. Interacts with the ribosome. Interacts with SecDF, and other proteins may be involved. Interacts with SecA.

It is found in the cell inner membrane. Its function is as follows. The central subunit of the protein translocation channel SecYEG. Consists of two halves formed by TMs 1-5 and 6-10. These two domains form a lateral gate at the front which open onto the bilayer between TMs 2 and 7, and are clamped together by SecE at the back. The channel is closed by both a pore ring composed of hydrophobic SecY resides and a short helix (helix 2A) on the extracellular side of the membrane which forms a plug. The plug probably moves laterally to allow the channel to open. The ring and the pore may move independently. The polypeptide is Protein translocase subunit SecY (Rickettsia conorii (strain ATCC VR-613 / Malish 7)).